The following is an 88-amino-acid chain: Small ribosomal subunit protein bS16c (88 aa).

This sequence belongs to the bacterial ribosomal protein bS16 family.

Its subcellular location is the plastid. The protein localises to the chloroplast. The polypeptide is Small ribosomal subunit protein bS16c (Coffea arabica (Arabian coffee)).